Reading from the N-terminus, the 233-residue chain is Ras-related protein RabV (233 aa).

Residue 15–22 (GEKEVGKS) participates in GTP binding. Positions 37–45 (YIPTIGIDF) match the Effector region motif. Residues 63-67 (DYVSH) and 122-125 (TKSD) contribute to the GTP site. The interval 143–182 (QNNNNNNNNNNNNNNNNNNNNNNNNNNNNNSNNNNNNNLQ) is disordered. Low complexity predominate over residues 144-180 (NNNNNNNNNNNNNNNNNNNNNNNNNNNNNSNNNNNNN).

This sequence belongs to the small GTPase superfamily. Rab family.

This Dictyostelium discoideum (Social amoeba) protein is Ras-related protein RabV (rabV).